The chain runs to 431 residues: MQNIHFIGIGGIGISALARFLKEKGFKISGSDLKESKITKELEKEGVKVSIPHHKDNILNKDLVIYSAAIKEENPEFKHAKELGIKCLSRKEALPLILEDKRVFAVAGAHGKSTTSSILASLLDDASVIIGAILKEFGSNMIYKESQNLVFEADESDSSFLNSNPYLAIVTNAEAEHLDHYGNEVSKLHHAYTQFLDVAKIRVINAEDEFLKNYKNESIKLYPSKDIKNCTMCIENFKPFTSFELKDLGEFKVFGMGYHLALDASLAILAALNFLDIETIRTRLKNYQGIKKRFDILHADENLVLIDDYGHHPTEIKATLSAAQEYAKLGGYKKITAIFEPHRYTRLAANLKEFAKAFEGVDELVILPVYAAGEEPIELDLKAVFPKALFVEDIKREGKFLVASKGQVFEEGLIIGFGAGDISNKLRQKNE.

108–114 serves as a coordination point for ATP; the sequence is GAHGKST.

The protein belongs to the MurCDEF family.

It is found in the cytoplasm. It carries out the reaction UDP-N-acetyl-alpha-D-muramate + L-alanine + ATP = UDP-N-acetyl-alpha-D-muramoyl-L-alanine + ADP + phosphate + H(+). Its pathway is cell wall biogenesis; peptidoglycan biosynthesis. Its function is as follows. Cell wall formation. The chain is UDP-N-acetylmuramate--L-alanine ligase from Campylobacter jejuni subsp. jejuni serotype O:6 (strain 81116 / NCTC 11828).